Consider the following 237-residue polypeptide: Phosphoribosylaminoimidazole-succinocarboxamide synthase (237 aa).

The protein belongs to the SAICAR synthetase family.

It carries out the reaction 5-amino-1-(5-phospho-D-ribosyl)imidazole-4-carboxylate + L-aspartate + ATP = (2S)-2-[5-amino-1-(5-phospho-beta-D-ribosyl)imidazole-4-carboxamido]succinate + ADP + phosphate + 2 H(+). It functions in the pathway purine metabolism; IMP biosynthesis via de novo pathway; 5-amino-1-(5-phospho-D-ribosyl)imidazole-4-carboxamide from 5-amino-1-(5-phospho-D-ribosyl)imidazole-4-carboxylate: step 1/2. The chain is Phosphoribosylaminoimidazole-succinocarboxamide synthase from Listeria monocytogenes serotype 4a (strain HCC23).